The chain runs to 213 residues: V-type proton ATPase subunit c'' (213 aa).

The Vacuolar segment spans residues 1–14 (MNKESKDDDMSLGK). The helical transmembrane segment at 15-35 (FSFSHFLYYLVLIVVIVYGLY) threads the bilayer. The Cytoplasmic portion of the chain corresponds to 36–61 (KLFTGHGSDINFGKFLLRTSPYMWAN). A helical membrane pass occupies residues 62–82 (LGIALCVGLSVVGAAWGIFIT). Topologically, residues 83–100 (GSSMIGAGVRAPRITTKN) are vacuolar. The helical transmembrane segment at 101 to 121 (LISIIFCEVVAIYGLIIAIVF) threads the bilayer. The Cytoplasmic portion of the chain corresponds to 122 to 144 (SSKLTVATAENMYSKSNLYTGYS). Residues 145–165 (LFWAGITVGASNLICGIAVGI) form a helical membrane-spanning segment. Over 166-183 (TGATAAISDAADSALFVK) the chain is Vacuolar. Residues 184–204 (ILVIEIFGSILGLLGLIVGLL) traverse the membrane as a helical segment. Residues 205–213 (MAGKASEFQ) lie on the Cytoplasmic side of the membrane.

This sequence belongs to the V-ATPase proteolipid subunit family. In terms of assembly, V-ATPase is a heteromultimeric enzyme composed of a peripheral catalytic V1 complex (components A to H) attached to an integral membrane V0 proton pore complex (components: a, c, c', c'', d, e, f and VOA1). The decameric c-ring forms the proton-conducting pore, and is composed of eight proteolipid subunits c, one subunit c' and one subunit c''.

It is found in the vacuole membrane. Proton-conducting pore forming subunit of the V0 complex of vacuolar(H+)-ATPase (V-ATPase), a multisubunit enzyme composed of a peripheral complex (V1) that hydrolyzes ATP and a membrane integral complex (V0) that translocates protons. V-ATPase is responsible for acidifying and maintaining the pH of intracellular compartments. The polypeptide is V-type proton ATPase subunit c'' (VMA16) (Saccharomyces cerevisiae (strain ATCC 204508 / S288c) (Baker's yeast)).